We begin with the raw amino-acid sequence, 531 residues long: SWI/SNF-related matrix-associated actin-dependent regulator of chromatin subfamily D member 2 (531 aa).

The disordered stretch occupies residues 20–85 (AVAAALGAPP…MSPGSRMPMA (66 aa)). A compositionally biased stretch (low complexity) spans 34 to 45 (PGMLPNPALRGP). 2 positions are modified to asymmetric dimethylarginine: R81 and R104. Residues 202-226 (FSPSKADGDNSGTAGTPGGTPAADK) form a disordered region. S203 carries the phosphoserine modification. The residue at position 217 (T217) is a Phosphothreonine. Residue K226 forms a Glycyl lysine isopeptide (Lys-Gly) (interchain with G-Cter in SUMO2) linkage. Positions 306-383 (HQPPQYKLDP…PMKLAGLLQH (78 aa)) constitute an SWIB/MDM2 domain.

It belongs to the SMARCD family. Component of the multiprotein chromatin-remodeling complexes SWI/SNF: SWI/SNF-A (BAF), SWI/SNF-B (PBAF) and related complexes. The canonical complex contains a catalytic subunit (either SMARCA4/BRG1/BAF190A or SMARCA2/BRM/BAF190B), and at least SMARCE1, ACTL6A/BAF53, SMARCC1/BAF155, SMARCC2/BAF170, and SMARCB1/SNF5/BAF47. Other subunits specific to each of the complexes may also be present permitting several possible combinations developmentally and tissue specific. Component of the BAF complex, which includes at least actin (ACTB), ARID1A/BAF250A, ARID1B/BAF250B, SMARCA2/BRM, SMARCA4/BRG1, ACTL6A/BAF53, ACTL6B/BAF53B, SMARCE1/BAF57, SMARCC1/BAF155, SMARCC2/BAF170, SMARCB1/SNF5/INI1, and one or more SMARCD1/BAF60A, SMARCD2/BAF60B, or SMARCD3/BAF60C. In muscle cells, the BAF complex also contains DPF3. Component of the SWI/SNF-B (PBAF) chromatin remodeling complex, at least composed of SMARCA4/BRG1, SMARCB1/BAF47/SNF5, ACTL6A/BAF53A or ACTL6B/BAF53B, SMARCE1/BAF57, SMARCD1/BAF60A, SMARCD2/BAF60B, perhaps SMARCD3/BAF60C, SMARCC1/BAF155, SMARCC2/BAF170, PBRM1/BAF180, ARID2/BAF200 and actin (ACTB). Interacts with UNKL. Interacts with CEBPE. Post-translationally, ubiquitinated through a signaling process involving RAC1 and the RING finger protein UNKL.

It localises to the nucleus. Functionally, involved in transcriptional activation and repression of select genes by chromatin remodeling (alteration of DNA-nucleosome topology). Component of SWI/SNF chromatin remodeling complexes that carry out key enzymatic activities, changing chromatin structure by altering DNA-histone contacts within a nucleosome in an ATP-dependent manner. Critical regulator of myeloid differentiation, controlling granulocytopoiesis and the expression of genes involved in neutrophil granule formation. The sequence is that of SWI/SNF-related matrix-associated actin-dependent regulator of chromatin subfamily D member 2 (Smarcd2) from Rattus norvegicus (Rat).